A 275-amino-acid chain; its full sequence is Probable ABC transporter permease protein PH1216 (275 aa).

6 consecutive transmembrane segments (helical) span residues 10–30 (LLYI…WSAI), 73–93 (IFTT…GFTI), 105–125 (LLAL…IPLV), 137–157 (ILGL…LLFT), 181–203 (IYTK…YQFT), and 241–261 (IQMA…IALG). The ABC transmembrane type-1 domain maps to 68-260 (ILNSLIFTTF…LPTLLIMIAL (193 aa)).

The protein belongs to the binding-protein-dependent transport system permease family. MalFG subfamily.

It localises to the cell membrane. In terms of biological role, probably part of a binding-protein-dependent transport system PH1214/15/16. Probably responsible for the translocation of the substrate across the membrane. The protein is Probable ABC transporter permease protein PH1216 of Pyrococcus horikoshii (strain ATCC 700860 / DSM 12428 / JCM 9974 / NBRC 100139 / OT-3).